The sequence spans 88 residues: Small ribosomal subunit protein uS19 (88 aa).

This sequence belongs to the universal ribosomal protein uS19 family.

In terms of biological role, protein S19 forms a complex with S13 that binds strongly to the 16S ribosomal RNA. The chain is Small ribosomal subunit protein uS19 from Ureaplasma parvum serovar 3 (strain ATCC 27815 / 27 / NCTC 11736).